We begin with the raw amino-acid sequence, 2967 residues long: BEACH domain-containing protein lvsD (2967 aa).

10 disordered regions span residues 1-25 (MSSP…RIGG), 322-364 (NNNN…SSNS), 588-615 (ILSI…QQQL), 917-936 (NNSN…NNIN), 1077-1105 (GGSN…KDKD), 1173-1220 (NTSS…SDHR), 1583-1613 (NNNS…NNEN), 1831-1859 (QQQQ…SSVV), 1921-2009 (PQKT…TLNN), and 2029-2062 (KSTL…NNKN). The BEACH 1 domain occupies 229–491 (MTFRKAPSSV…QDLFRKGSNY (263 aa)). Positions 1079–1092 (SNNNNNNNNNNSNN) are enriched in low complexity. A compositionally biased stretch (basic and acidic residues) spans 1093 to 1105 (NKDKIDSNNKDKD). Low complexity-rich tracts occupy residues 1185–1194 (PLLTSTKSMS), 1583–1611 (NNNS…LNNN), 1831–1857 (QQQQ…SSSS), 1926–1980 (QNQH…SFSN), 1993–2006 (NIIT…TTST), and 2034–2062 (SSSS…NNKN). In terms of domain architecture, BEACH-type PH spans 2060 to 2162 (NKNIKLEFST…ICAQILKLIG (103 aa)). BEACH domains lie at 2202-2492 (TPQQ…HPQR) and 2628-2785 (NSRV…IYSN). WD repeat units follow at residues 2658–2710 (NHKS…SDHH) and 2720–2761 (GHNF…KSIQ). Disordered regions lie at residues 2798-2820 (SATT…SSNT) and 2915-2934 (PSTS…NNGN). Low complexity-rich tracts occupy residues 2811-2820 (SSSSLSSSNT) and 2924-2934 (NSNNNNNNNGN).

The polypeptide is BEACH domain-containing protein lvsD (lvsD) (Dictyostelium discoideum (Social amoeba)).